An 85-amino-acid chain; its full sequence is Small ribosomal subunit protein eS27 (85 aa).

Residues 38–60 (CHGCRTITTVFSHAQNVVICSSC) form a C4-type zinc finger.

The protein belongs to the eukaryotic ribosomal protein eS27 family. The cofactor is Zn(2+).

This chain is Small ribosomal subunit protein eS27 (rps27), found in Dictyostelium discoideum (Social amoeba).